The sequence spans 933 residues: Myocardin (933 aa).

Positions 12 to 27 (IRSKFRSVLQLRLQQR) match the MEF2C-binding motif. 3 RPEL repeats span residues 18–43 (SVLQ…PPLR), 62–87 (DTLK…QASS), and 106–131 (DDLN…PVDC). Residues 153 to 205 (FEEDSSSDGLSPDQTRSEDLPGSAGSPLDTKAAETPLAGPRGTVQDLTLGSEN) are HDAC5-binding. Disordered stretches follow at residues 154 to 282 (EEDS…PPPM) and 324 to 365 (NEQM…GPLP). The span at 210–220 (SAPQSGNQSDL) shows a compositional bias: polar residues. The span at 248–265 (NRHKKPKDPKPKVKKLKY) shows a compositional bias: basic residues. Over residues 330 to 346 (NPNSSSAPLSSTPLSPA) the composition is skewed to low complexity. Positions 347–357 (KNSFSGQTGVS) are enriched in polar residues. One can recognise an SAP domain in the interval 368–402 (LDDLKVSELRQQLRIRGLPVSGTKTALMDRLRPFQ). A phosphoserine; by GSK3-beta mark is found at Ser-445, Ser-449, Ser-453, and Ser-457. A coiled-coil region spans residues 515 to 550 (LVEKQKVINELTWKLQQEQRQVEELRMQLQKQKRGT). The segment at 568–613 (DAGSSCPFAPLPRAVKRQSNSSEEQPAAGDAARLRPLGNTHCAESS) is disordered. Phosphoserine; by GSK3-beta occurs at positions 621, 625, 629, and 633. Disordered stretches follow at residues 630–672 (PQHS…VSSP) and 760–794 (PKIP…FDHY). Residues 712-933 (ITQPPSYEDA…SPMDLHLQQW (222 aa)) are required for interaction with and ubiquitination by STUB1. A phosphoserine; by MAPK1 and MAPK3 mark is found at Ser-810, Ser-857, and Ser-864. Thr-891 bears the Phosphothreonine; by MAPK1 and MAPK3 mark.

As to quaternary structure, homodimer. Interacts with MLLT7/FOXO4. Interacts with SRF, its association does not depend on specific DNA sequences for ternary complex formation. Interacts (via C-terminal) with EP300 (via the CREB-binding domain). Interacts with HDAC4 and HDAC5. Interacts with MEF2C. Interacts (via C-terminus) with STUB1/CHIP. Interacts with PURB. In terms of processing, ubiquitinated; by STUB1/CHIP at the C-terminus, leading to its degradation by the proteasome. Phosphorylation by GSK3B is required for STUB1/CHIP-mediated ubiquitination. Phosphorylation negatively regulates the intrinsic myocardin transcriptional activity. Phosphorylated; by GSK3B. In terms of tissue distribution, expressed in the heart and in smooth muscle cells-containing tissues (aorta, pulmonary vein, lung), but is not detectable in skeletal muscle, liver, kidney and spleen.

It is found in the nucleus. In terms of biological role, smooth muscle cells (SM) and cardiac muscle cells-specific transcriptional factor which uses the canonical single or multiple CArG boxes DNA sequence. Acts as a cofactor of serum response factor (SRF) with the potential to modulate SRF-target genes. Plays a crucial role in cardiogenesis, urinary bladder development, and differentiation of the smooth muscle cell lineage (myogenesis). Positively regulates the transcription of genes involved in vascular smooth muscle contraction. This chain is Myocardin (MYOCD), found in Sus scrofa (Pig).